Reading from the N-terminus, the 705-residue chain is Polyribonucleotide nucleotidyltransferase (705 aa).

Mg(2+) is bound by residues Asp-487 and Asp-493. The KH domain occupies Pro-554 to Ile-613. Residues Gly-623–Lys-691 enclose the S1 motif domain.

The protein belongs to the polyribonucleotide nucleotidyltransferase family. Mg(2+) is required as a cofactor.

The protein resides in the cytoplasm. The enzyme catalyses RNA(n+1) + phosphate = RNA(n) + a ribonucleoside 5'-diphosphate. Its function is as follows. Involved in mRNA degradation. Catalyzes the phosphorolysis of single-stranded polyribonucleotides processively in the 3'- to 5'-direction. This Bacillus pumilus (strain SAFR-032) protein is Polyribonucleotide nucleotidyltransferase.